A 511-amino-acid chain; its full sequence is 2-isopropylmalate synthase (511 aa).

The region spanning Leu-5 to Val-267 is the Pyruvate carboxyltransferase domain. Mn(2+) contacts are provided by Asp-14, His-202, His-204, and Asn-238. The interval Arg-393–Leu-511 is regulatory domain.

This sequence belongs to the alpha-IPM synthase/homocitrate synthase family. LeuA type 1 subfamily. As to quaternary structure, homodimer. Mn(2+) is required as a cofactor.

It localises to the cytoplasm. The catalysed reaction is 3-methyl-2-oxobutanoate + acetyl-CoA + H2O = (2S)-2-isopropylmalate + CoA + H(+). Its pathway is amino-acid biosynthesis; L-leucine biosynthesis; L-leucine from 3-methyl-2-oxobutanoate: step 1/4. Its function is as follows. Catalyzes the condensation of the acetyl group of acetyl-CoA with 3-methyl-2-oxobutanoate (2-ketoisovalerate) to form 3-carboxy-3-hydroxy-4-methylpentanoate (2-isopropylmalate). This Aromatoleum aromaticum (strain DSM 19018 / LMG 30748 / EbN1) (Azoarcus sp. (strain EbN1)) protein is 2-isopropylmalate synthase.